The sequence spans 593 residues: MRKFTLLMLLLIVISMSGIAGAAEVKNLNTSKTFTKIQEAIDDPSTTDGNIIIVGPGNYTENILVNKSLTLKSNGSAIINAVSSEKSTITIKANNVWIEGFIIIGGKNGIYMENVTGCTITNNTIQNAFVSGWEYYGGNGICLVNSTNNTITNNIIRNNTWNGINVCESKGNIIKNNTIMYSGGIGIYVWGFNKFEGNNIIENNRIINATYGGIYLFRPSNNKICRNYIANVSSGGGGMSGAICIDVSDYNIVKDNIGINCDGGLFTDGMIGNEITNNIFKNCKVAVSESTYGPASRNNKIYGNYFINYETAISDPKGELVDNIWNTTEGGNYWSNYTGNNTGDGTGNIPYYYDNKPLVVDLAIEDIAAKPSGIEVRVKNLGKADIKKIDPLTKLKIKISCDNDVYETFIDPLSAGESQIVRWDKIVPEGNHTIKAEIPYSAEGYLIGTNIRDADISNNVFSKIVQGFVQNKTFTITLTNLGKSTITIKYYISIYTNPVNGTKVSYRELTITLKPNETKTIELGKYPFKYAVSGTMIVKNPSRYRIPLNLRIKYEIEGLNPQMREISKYIAPRGEFRYIARYTGKEEGYADVW.

The N-terminal stretch at methionine 1–alanine 22 is a signal peptide. Residues asparagine 29, asparagine 58, asparagine 66, asparagine 74, asparagine 114, asparagine 122, asparagine 145, asparagine 148, asparagine 158, asparagine 176, asparagine 208, asparagine 231, asparagine 326, asparagine 336, asparagine 340, asparagine 431, asparagine 471, asparagine 500, and asparagine 516 are each glycosylated (N-linked (GalNAc...) asparagine).

In terms of processing, N-glycosylated; contains glycans composed of methyl-Man, Man and GalNAc residues in a molar ratio of 2:3:1.

It localises to the secreted. The protein resides in the cell wall. Its subcellular location is the S-layer. Functionally, the S-layer is a paracrystalline mono-layered assembly of proteins which coat the surface of the cell. This chain is Cell surface glycoprotein (slgA), found in Methanothermus fervidus (strain ATCC 43054 / DSM 2088 / JCM 10308 / V24 S).